Reading from the N-terminus, the 406-residue chain is uncharacterized protein (406 aa).

Gly-2 is lipidated: N-myristoyl glycine; by host. The segment at 291–406 (QLESTTEVKP…FQYNKPTYDI (116 aa)) is disordered. A compositionally biased stretch (basic and acidic residues) spans 296–310 (TEVKPESTTEVKPES). Residues 311 to 323 (TSEVQPESTTEFQ) show a composition bias toward polar residues. Low complexity-rich tracts occupy residues 324 to 333 (PESTTVVEPE), 341 to 351 (ESTTEFQPEST), and 359 to 369 (TTEPQVESTTE). Over residues 370-406 (FQPESSTEPQVESTVEVQAESMNESSYFQYNKPTYDI) the composition is skewed to polar residues.

This is an uncharacterized protein from Acanthamoeba polyphaga (Amoeba).